The primary structure comprises 65 residues: Chymotrypsin/elastase isoinhibitors 2 to 5 (65 aa).

5 disulfides stabilise this stretch: cysteine 4–cysteine 37, cysteine 13–cysteine 32, cysteine 16–cysteine 28, cysteine 20–cysteine 59, and cysteine 39–cysteine 53. In terms of domain architecture, TIL spans cysteine 4–cysteine 59.

This sequence belongs to the serine protease inhibitor-like (TIL domain-containing) family.

The protein localises to the secreted. Functionally, defends the organism against the host's proteinases. This chain is Chymotrypsin/elastase isoinhibitors 2 to 5, found in Ascaris suum (Pig roundworm).